A 257-amino-acid polypeptide reads, in one-letter code: Small ribosomal subunit protein uS4c (257 aa).

S4 RNA-binding domains are found at residues 110-170 (MRLD…QLVN) and 189-255 (KTLP…KNYL).

This sequence belongs to the universal ribosomal protein uS4 family. In terms of assembly, part of the 30S ribosomal subunit. Contacts protein S5. The interaction surface between S4 and S5 is involved in control of translational fidelity.

It is found in the plastid. The protein resides in the chloroplast. Its function is as follows. One of the primary rRNA binding proteins, it binds directly to 16S rRNA where it nucleates assembly of the body of the 30S subunit. Functionally, with S5 and S12 plays an important role in translational accuracy. The protein is Small ribosomal subunit protein uS4c (rps4) of Chlamydomonas reinhardtii (Chlamydomonas smithii).